The sequence spans 361 residues: Peptide chain release factor 1 (361 aa).

Position 237 is an N5-methylglutamine (glutamine 237).

It belongs to the prokaryotic/mitochondrial release factor family. In terms of processing, methylated by PrmC. Methylation increases the termination efficiency of RF1.

Its subcellular location is the cytoplasm. Peptide chain release factor 1 directs the termination of translation in response to the peptide chain termination codons UAG and UAA. This Thioalkalivibrio sulfidiphilus (strain HL-EbGR7) protein is Peptide chain release factor 1.